The following is a 515-amino-acid chain: Protein translocase subunit SecD (515 aa).

A helical transmembrane segment spans residues 6-26 (LYSLIFIIILTAFAVWVDLPG). The tract at residues 141–186 (AITNGNQNQNSTKNGTPTPGTTPTPESTPQANQTPVAANVTPTPED) is disordered. Low complexity predominate over residues 150 to 169 (NSTKNGTPTPGTTPTPESTP). Over residues 170–186 (QANQTPVAANVTPTPED) the composition is skewed to polar residues. 5 helical membrane passes run 322 to 342 (RSIR…ILYY), 344 to 364 (LPGF…FALF), 367 to 387 (IPVT…GMAV), 427 to 447 (ISTL…GASV), and 450 to 470 (GFAI…IFVT).

Belongs to the SecD/SecF family. SecD subfamily. In terms of assembly, forms a complex with SecF. Part of the essential Sec protein translocation apparatus which comprises SecA, SecYEG and auxiliary proteins SecDF. Other proteins may also be involved.

It is found in the cell membrane. Part of the Sec protein translocase complex. Interacts with the SecYEG preprotein conducting channel. SecDF uses the proton motive force (PMF) to complete protein translocation after the ATP-dependent function of SecA. This is Protein translocase subunit SecD from Thermobaculum terrenum (strain ATCC BAA-798 / CCMEE 7001 / YNP1).